A 362-amino-acid polypeptide reads, in one-letter code: Protein RecA (362 aa).

Position 77-84 (77-84 (GPESSGKT)) interacts with ATP.

The protein belongs to the RecA family.

It localises to the cytoplasm. In terms of biological role, can catalyze the hydrolysis of ATP in the presence of single-stranded DNA, the ATP-dependent uptake of single-stranded DNA by duplex DNA, and the ATP-dependent hybridization of homologous single-stranded DNAs. It interacts with LexA causing its activation and leading to its autocatalytic cleavage. This chain is Protein RecA, found in Rhizobium leguminosarum bv. trifolii (strain WSM2304).